The primary structure comprises 319 residues: Putative binding protein BAB2_1146 (319 aa).

The signal sequence occupies residues methionine 1 to alanine 22.

It belongs to the bacterial solute-binding protein SsuA/TauA family. As to quaternary structure, the complex is composed of two ATP-binding proteins (BAB2_1147), two transmembrane proteins (BAB2_1148) and a solute-binding protein (BAB2_1146).

It is found in the periplasm. In terms of biological role, probably part of an ABC transporter complex. The polypeptide is Putative binding protein BAB2_1146 (Brucella abortus (strain 2308)).